The sequence spans 382 residues: MSVSNRNGNGSEVIYVGDRSTNRPPRNAPSPDEDRKEVKILFFDLTYYNTTTKFLLCCAGVFVLYLLYGYMQELIFTLDGFKPYGWFLTLVQFAYYTVFGYVERSLESKRVPRCIPMKTYVLLAFLTLGTMGLSNSSLGYLNYPTQVIFKCCKLVPVLIGSILIQGKKHGPLDFLAAIAMCLGLTLFTLADSQVSPNFNPFGVLLISLALLCDAAIGNVQEKAMREHKAPNNEVVIYSYGIGFVYLSVIMLLTGNLFSGITFCMKYPVETFGYAFLFSLSGYLGIQIVLTLVRTCGAPLAATVTTARKAVTIALSFVFFSKPFTINYLWSGLIVVLGIYLNVYSKRSKLTFADLNRTAERIYRKLVPQRGGSSSTKKLLLEV.

Residues 1-10 (MSVSNRNGNG) show a composition bias toward polar residues. The interval 1-33 (MSVSNRNGNGSEVIYVGDRSTNRPPRNAPSPDE) is disordered. The next 10 membrane-spanning stretches (helical) occupy residues 56-76 (LCCA…ELIF), 83-103 (PYGW…GYVE), 121-141 (VLLA…LGYL), 144-164 (PTQV…SILI), 170-190 (GPLD…FTLA), 197-217 (NFNP…AAIG), 234-254 (VVIY…LLTG), 271-291 (FGYA…VLTL), 299-319 (LAAT…FVFF), and 323-343 (FTIN…LNVY).

The protein belongs to the nucleotide-sugar transporter family. SLC35B subfamily.

Its subcellular location is the golgi apparatus membrane. Mediates the transport of adenosine 3'-phospho 5'-phosphosulfate (PAPS), from cytosol into Golgi. PAPS is a universal sulfuryl donor for sulfation events that take place in the Golgi. Essential for viability. Involved in glycosaminoglycan synthesis and the subsequent signaling. May be involved in hh and dpp signaling by controlling the sulfation of heparan sulfate (HS). This is Adenosine 3'-phospho 5'-phosphosulfate transporter 2 from Aedes aegypti (Yellowfever mosquito).